Reading from the N-terminus, the 379-residue chain is Cytochrome b (379 aa).

4 consecutive transmembrane segments (helical) span residues 33–53, 77–98, 113–133, and 178–198; these read FGSLLGACLIIQVITGLFLAM, WMIRYLHANGASMFFLCLFIHV, WNVGIILLFSVMATAFMGYVL, and FFALHFILPFIISAWVMIHLL. Residues histidine 83 and histidine 97 each coordinate heme b. Residues histidine 182 and histidine 196 each coordinate heme b. Histidine 201 contributes to the a ubiquinone binding site. 4 consecutive transmembrane segments (helical) span residues 226–246, 288–308, 320–340, and 347–367; these read TKDFLGLLLLILLLMTLALFY, LGGVVALILSILILMIIPFLQ, LSQFLFWILVADLLTLTWIGG, and FISIGQTASMLYFSLMIFIMP.

It belongs to the cytochrome b family. The cytochrome bc1 complex contains 11 subunits: 3 respiratory subunits (MT-CYB, CYC1 and UQCRFS1), 2 core proteins (UQCRC1 and UQCRC2) and 6 low-molecular weight proteins (UQCRH/QCR6, UQCRB/QCR7, UQCRQ/QCR8, UQCR10/QCR9, UQCR11/QCR10 and a cleavage product of UQCRFS1). This cytochrome bc1 complex then forms a dimer. Heme b serves as cofactor.

It is found in the mitochondrion inner membrane. Its function is as follows. Component of the ubiquinol-cytochrome c reductase complex (complex III or cytochrome b-c1 complex) that is part of the mitochondrial respiratory chain. The b-c1 complex mediates electron transfer from ubiquinol to cytochrome c. Contributes to the generation of a proton gradient across the mitochondrial membrane that is then used for ATP synthesis. This is Cytochrome b (MT-CYB) from Lepilemur septentrionalis (Northern sportive lemur).